An 839-amino-acid chain; its full sequence is Taste receptor type 1 member 2 (839 aa).

Positions 1–19 are cleaved as a signal peptide; the sequence is MGTRATTICSLFFLLWVLA. Residues 20–566 are Extracellular-facing; sequence EPAENSDFYL…VFLEWHEAPT (547 aa). N-linked (GlcNAc...) asparagine glycans are attached at residues Asn84, Asn248, Asn292, Asn312, Asn368, Asn407, Asn428, Asn487, and Asn527. Residues 567–587 form a helical membrane-spanning segment; it reads IAVALLAALGFLSTLAILVIF. Residues 588-602 lie on the Cytoplasmic side of the membrane; that stretch reads WRHFQTPIVRSAGGP. A helical membrane pass occupies residues 603-623; it reads MCFLMLTLLLVAYMVVPVYVG. Residues 624-635 lie on the Extracellular side of the membrane; that stretch reads PPKVSTCLCRQA. A helical membrane pass occupies residues 636–656; it reads LFPLCFTICISCIAVRSFQIV. At 657–681 the chain is on the cytoplasmic side; that stretch reads CAFKMASRFPRAYSYWVRYQGPYVS. A helical membrane pass occupies residues 682 to 702; the sequence is MAFITVLKMVIVVIGMLATGL. The Extracellular portion of the chain corresponds to 703-727; the sequence is SPTTRTDPDDPKITIVSCNPNYRNS. A helical transmembrane segment spans residues 728-748; the sequence is LLFNTSLDLLLSVVGFSFAYM. The Cytoplasmic segment spans residues 749 to 760; it reads GKELPTNYNEAK. Residues 761 to 781 traverse the membrane as a helical segment; that stretch reads FITLSMTFYFTSSVSLCTFMS. Topologically, residues 782–784 are extracellular; the sequence is AYS. Residues 785–805 form a helical membrane-spanning segment; that stretch reads GVLVTIVDLLVTVLNLLAISL. Residues 806–839 lie on the Cytoplasmic side of the membrane; sequence GYFGPKCYMILFYPERNTPAYFNSMIQGYTMRRD.

Belongs to the G-protein coupled receptor 3 family. TAS1R subfamily. As to quaternary structure, forms heterodimers with TAS1R3.

The protein resides in the cell membrane. Putative taste receptor. TAS1R2/TAS1R3 recognizes diverse natural and synthetic sweeteners. In Gorilla gorilla gorilla (Western lowland gorilla), this protein is Taste receptor type 1 member 2 (TAS1R2).